The primary structure comprises 506 residues: Cytochrome P450 monooxygenase atr2 (506 aa).

Residues 18-38 form a helical membrane-spanning segment; the sequence is VFAGLVLASLLTTTYCIWNIF. Cys-451 is a heme binding site.

This sequence belongs to the cytochrome P450 family. Heme is required as a cofactor.

Its subcellular location is the membrane. The enzyme catalyses 4-O-demethylbarbatate + reduced [NADPH--hemoprotein reductase] + O2 = proatranorin II + oxidized [NADPH--hemoprotein reductase] + H2O + H(+). It catalyses the reaction proatranorin II + reduced [NADPH--hemoprotein reductase] + O2 = proatranorin III + oxidized [NADPH--hemoprotein reductase] + 2 H2O + H(+). It carries out the reaction proatranorin I + reduced [NADPH--hemoprotein reductase] + O2 = proatranorin IV + oxidized [NADPH--hemoprotein reductase] + H2O + H(+). The catalysed reaction is proatranorin IV + reduced [NADPH--hemoprotein reductase] + O2 = atranorin + oxidized [NADPH--hemoprotein reductase] + 2 H2O + H(+). It functions in the pathway secondary metabolite biosynthesis; terpenoid biosynthesis. In terms of biological role, cytochrome P450 monooxygenase; part of the gene cluster that mediates the biosynthesis of atranorin, a depside of polyketide origin that accumulates in the cortical or medullary layers of lichen thalli. Atr2 performs the oxidation at the C-9 position of 4-O-demethylbarbatic acid to yield proatranorin III via proatranorin II. Atr2 is also able to oxidize the atr3 product proatranorin I to produce the final compound atranorin. The first step in the pathway is performed by the non-reducing polyketide synthase atr1 that produces 4-O-demethylbarbatic acid composed of two 3-methylorsellinic acid (3MOA) moieties. The pathway continues with the actions of the cytochrome P450 monooygenase atr2 that catalizes the oxidation of c-9 and the O-methyltransferase atr3 that performs the methylation of the carboxyl group to yield atranorin, via the proatranorin II and III intermediates if atr2 acts first, or the proatranorin I intermediate if atr3 acts first. This chain is Cytochrome P450 monooxygenase atr2, found in Stereocaulon alpinum (Alpine snow lichen).